We begin with the raw amino-acid sequence, 361 residues long: Geranylgeranyl pyrophosphate synthase 3 (361 aa).

A disordered region spans residues D44–P63. 3 residues coordinate isopentenyl diphosphate: K81, R84, and H113. Mg(2+)-binding residues include D120 and D124. R129 contributes to the dimethylallyl diphosphate binding site. R130 lines the isopentenyl diphosphate pocket. Residues K207, T208, and Q244 each contribute to the dimethylallyl diphosphate site. D247 contributes to the Mg(2+) binding site. 3 residues coordinate dimethylallyl diphosphate: N251, K261, and K271.

Belongs to the FPP/GGPP synthase family. It depends on Mg(2+) as a cofactor.

The catalysed reaction is isopentenyl diphosphate + dimethylallyl diphosphate = (2E)-geranyl diphosphate + diphosphate. The enzyme catalyses isopentenyl diphosphate + (2E)-geranyl diphosphate = (2E,6E)-farnesyl diphosphate + diphosphate. It carries out the reaction isopentenyl diphosphate + (2E,6E)-farnesyl diphosphate = (2E,6E,10E)-geranylgeranyl diphosphate + diphosphate. Geranylgeranyl pyrophosphate synthase; part of the gene cluster 25 that mediates the biosynthesis of an isoprenoid secondary metabolite. The protein is Geranylgeranyl pyrophosphate synthase 3 (GGS3) of Zymoseptoria tritici (strain CBS 115943 / IPO323) (Speckled leaf blotch fungus).